The following is a 616-amino-acid chain: MKYINKLEEWLGGTLFIAIFGILIAQILSRQVFHSPLIWSEELAKLLFVYVGMLGISVAVRKQEHVFIDFLTNLMPEKIRKFTNTFVQLLVFVCIFLFIHFGIRTFNDASFPIDALGGISEKWIFAALPVIAILMMFRFIQAQTINFKTGKSYLPATFFIISAVILFAILFFAPDWFKVLRISNYIKLGSSSVYIALLVWLIIMFIGVPVGWSLFIATLLYFSMTRWNVVNAATEKLVYSLDSFPLLAVPFYILTGILMNTGGITERIFNFAKSLLGHYTGGMGHVNIGASLLFSGMSGSALADAGGLGQLEIKAMRDAGYDDDICGGITAASCIIGPLVPPSIAMIIYGVIANESIAKLFIAGFIPGVLITLALMAMNYRIAKKRGYPRTPKATREQLCSSFKQSFWAILTPLLIIGGIFSGLFSPTESAIVAAAYSIIIGKFVYKELTLKTLFNSCIEAMAITGVVALMIMTVTFFGDMIAREQVAMRVADVFVAVADSPLTVLVMINALLLFLGMFIDALALQFLVLPMLIPIAMQFNIDLIFFGVMTTLNMMIGILTPPMGMALFVVARVGNMSVSTVTKGVLPFLIPVFVTLVLITIFPQIITFVPNLLIP.

Positions 1–190 are TRAP transporter small permease; sequence MKYINKLEEW…RISNYIKLGS (190 aa). 17 helical membrane-spanning segments follow: residues 9 to 29, 36 to 56, 83 to 103, 117 to 137, 153 to 173, 195 to 215, 244 to 264, 288 to 308, 332 to 352, 357 to 377, 407 to 427, 431 to 451, 459 to 479, 505 to 525, 527 to 547, 552 to 572, and 587 to 607; these read EWLGGTLFIAIFGILIAQILS, PLIWSEELAKLLFVYVGMLGI, TNTFVQLLVFVCIFLFIHFGI, GGISEKWIFAALPVIAILMMF, YLPATFFIISAVILFAILFFA, IALLVWLIIMFIGVPVGWSLF, FPLLAVPFYILTGILMNTGGI, IGASLLFSGMSGSALADAGGL, ASCIIGPLVPPSIAMIIYGVI, IAKLFIAGFIPGVLITLALMA, FWAILTPLLIIGGIFSGLFSP, AIVAAAYSIIIGKFVYKELTL, IEAMAITGVVALMIMTVTFFG, VLVMINALLLFLGMFIDALAL, FLVLPMLIPIAMQFNIDLIFF, TLNMMIGILTPPMGMALFVVA, and LPFLIPVFVTLVLITIFPQII. Residues 191–616 are TRAP transporter large permease; that stretch reads SSVYIALLVW…ITFVPNLLIP (426 aa).

It in the N-terminal section; belongs to the TRAP transporter small permease family. This sequence in the C-terminal section; belongs to the TRAP transporter large permease family. The complex comprises the extracytoplasmic solute receptor protein SiaP, and the fused transmembrane protein SiaT.

It is found in the cell inner membrane. Functionally, part of the tripartite ATP-independent periplasmic (TRAP) transport system SiaPT involved in the uptake of sialic acid. The polypeptide is Sialic acid TRAP transporter permease protein SiaT (siaT) (Haemophilus influenzae (strain 86-028NP)).